We begin with the raw amino-acid sequence, 148 residues long: Ribosome maturation factor RimP (148 aa).

This sequence belongs to the RimP family.

It is found in the cytoplasm. Functionally, required for maturation of 30S ribosomal subunits. The protein is Ribosome maturation factor RimP of Thermosipho africanus (strain TCF52B).